A 215-amino-acid polypeptide reads, in one-letter code: Outer-membrane lipoprotein LolB (215 aa).

The signal sequence occupies residues 1 to 19; that stretch reads MSKLRKITSLIFLTIIMVG. Cys20 carries N-palmitoyl cysteine lipidation. Residue Cys20 is the site of S-diacylglycerol cysteine attachment.

It belongs to the LolB family. As to quaternary structure, monomer.

The protein resides in the cell outer membrane. Plays a critical role in the incorporation of lipoproteins in the outer membrane after they are released by the LolA protein. This chain is Outer-membrane lipoprotein LolB, found in Vibrio atlanticus (strain LGP32) (Vibrio splendidus (strain Mel32)).